The chain runs to 412 residues: NAD-dependent dihydropyrimidine dehydrogenase subunit PreT (412 aa).

Glu-286 is a binding site for NAD(+).

It belongs to the NADH dehydrogenase family. In terms of assembly, heterotetramer of 2 PreA and 2 PreT subunits.

It carries out the reaction 5,6-dihydrouracil + NAD(+) = uracil + NADH + H(+). The catalysed reaction is 5,6-dihydrothymine + NAD(+) = thymine + NADH + H(+). Involved in pyrimidine base degradation. Catalyzes physiologically the reduction of uracil to 5,6-dihydrouracil (DHU) by using NADH as a specific cosubstrate. It also catalyzes the reverse reaction and the reduction of thymine to 5,6-dihydrothymine (DHT). This is NAD-dependent dihydropyrimidine dehydrogenase subunit PreT (preT) from Escherichia coli (strain K12).